We begin with the raw amino-acid sequence, 262 residues long: MNFVVLTLFPLMFPAFAGHGIVRRAVEQGLVDIEALNIRDFAEGRHSTTDDRPYGGGNGMVLKPEPLAKAIRAAKEVHTDARVVFLGPRGRLFDQETAARLAGGKDIIMVCGRYEGIDERIAATLIDEEISIGDYILSGGETAAMVVMDAIIRLIPGALGNESSAEQESFSNQLLEHSHFTRPPVFEGMETPEILLSGDHGKIDQWRTRASLLYTLANRPDLLEGREFSKEEITILENWGRQIADIIRTQGLHGPDALSRNR.

S-adenosyl-L-methionine contacts are provided by residues Gly-112 and 132 to 137; that span reads IGDYIL.

This sequence belongs to the RNA methyltransferase TrmD family. As to quaternary structure, homodimer.

It is found in the cytoplasm. The catalysed reaction is guanosine(37) in tRNA + S-adenosyl-L-methionine = N(1)-methylguanosine(37) in tRNA + S-adenosyl-L-homocysteine + H(+). Its function is as follows. Specifically methylates guanosine-37 in various tRNAs. The chain is tRNA (guanine-N(1)-)-methyltransferase from Desulfatibacillum aliphaticivorans.